Reading from the N-terminus, the 881-residue chain is Tyrosine-protein kinase receptor TYRO3 (881 aa).

The N-terminal stretch at 1-28 (MVNPGPPGLIAGLLLAALSLSSVDGTKA) is a signal peptide. Ig-like C2-type domains are found at residues 29 to 114 (LGFV…KSVS) and 125 to 206 (PYFT…AIVE). Over 29 to 414 (LGFVGHGYNM…QRHPHTRMSW (386 aa)) the chain is Extracellular. N-linked (GlcNAc...) asparagine glycosylation is found at Asn-37 and Asn-49. A disulfide bridge links Cys-50 with Cys-103. Asn-143 carries N-linked (GlcNAc...) asparagine glycosylation. A disulfide bond links Cys-146 and Cys-189. Fibronectin type-III domains follow at residues 213–306 (PPFN…TKEK) and 311–401 (IPQN…SKEE). 4 N-linked (GlcNAc...) asparagine glycosylation sites follow: Asn-216, Asn-279, Asn-351, and Asn-365. A helical membrane pass occupies residues 415–435 (VPMVLGILTALVTVVAMTLIF). The Cytoplasmic segment spans residues 436–881 (LRKGRKETRF…MQEEQVVITL (446 aa)). The Protein kinase domain occupies 503–774 (FTLGRTLGKG…VDLKRRLEAI (272 aa)). ATP is bound by residues 509-517 (LGKGEFGSV) and Lys-535. Catalysis depends on Asp-640, which acts as the Proton acceptor. Tyr-671 is subject to Phosphotyrosine; by autocatalysis. The tract at residues 846-881 (EWSSSAQNGEARGLLHEEEEEEEEEEMQEEQVVITL) is disordered. A compositionally biased stretch (acidic residues) spans 862–874 (EEEEEEEEEEMQE).

Belongs to the protein kinase superfamily. Tyr protein kinase family. AXL/UFO subfamily. Tyrosine phosphorylated upon receptor stimulation.

It is found in the cell membrane. It catalyses the reaction L-tyrosyl-[protein] + ATP = O-phospho-L-tyrosyl-[protein] + ADP + H(+). In terms of biological role, may be involved in cell adhesion processes, particularly in the central nervous system. In Xenopus tropicalis (Western clawed frog), this protein is Tyrosine-protein kinase receptor TYRO3 (tyro3).